A 126-amino-acid polypeptide reads, in one-letter code: Actin-depolymerizing factor (126 aa).

One can recognise an ADF-H domain in the interval 1–126; the sequence is EDNCKLKFLE…SFDIIKSRAL (126 aa).

This sequence belongs to the actin-binding proteins ADF family. In terms of tissue distribution, preferentially in mature anther.

Actin-depolymerizing protein. Severs actin filaments (F-actin) and binds to actin monomers. The polypeptide is Actin-depolymerizing factor (Brassica napus (Rape)).